The sequence spans 362 residues: tRNA 2-selenouridine synthase (362 aa).

The region spanning 14–137 (LANETPIIDV…LRQATIEMTN (124 aa)) is the Rhodanese domain. Cys-97 functions as the S-selanylcysteine intermediate in the catalytic mechanism.

This sequence belongs to the SelU family. Monomer.

The enzyme catalyses 5-methylaminomethyl-2-thiouridine(34) in tRNA + selenophosphate + (2E)-geranyl diphosphate + H2O + H(+) = 5-methylaminomethyl-2-selenouridine(34) in tRNA + (2E)-thiogeraniol + phosphate + diphosphate. It catalyses the reaction 5-methylaminomethyl-2-thiouridine(34) in tRNA + (2E)-geranyl diphosphate = 5-methylaminomethyl-S-(2E)-geranyl-thiouridine(34) in tRNA + diphosphate. The catalysed reaction is 5-methylaminomethyl-S-(2E)-geranyl-thiouridine(34) in tRNA + selenophosphate + H(+) = 5-methylaminomethyl-2-(Se-phospho)selenouridine(34) in tRNA + (2E)-thiogeraniol. It carries out the reaction 5-methylaminomethyl-2-(Se-phospho)selenouridine(34) in tRNA + H2O = 5-methylaminomethyl-2-selenouridine(34) in tRNA + phosphate. Its function is as follows. Involved in the post-transcriptional modification of the uridine at the wobble position (U34) of tRNA(Lys), tRNA(Glu) and tRNA(Gln). Catalyzes the conversion of 2-thiouridine (S2U-RNA) to 2-selenouridine (Se2U-RNA). Acts in a two-step process involving geranylation of 2-thiouridine (S2U) to S-geranyl-2-thiouridine (geS2U) and subsequent selenation of the latter derivative to 2-selenouridine (Se2U) in the tRNA chain. The chain is tRNA 2-selenouridine synthase from Proteus mirabilis (strain HI4320).